Here is a 691-residue protein sequence, read N- to C-terminus: MSRSTPLKKVRNIGIAAHIDAGKTTTSERILFFTGMSHKIGEVHDGAATMDWMEQEKERGITITSAATTCFWKDHQINLIDTPGHVDFTIEVERSMRVLDGAVAVFCSVGGVQPQSETVWRQANKYGVPRIVFVNKMDRIGANFYNVEDQIRNRLKANPVPLQIPIGAEDNFKGVIDLVTMKALVWEDDTKPTDYVEKEIPAELKEKAEEYRTKMIEAVSETSDELMEKYLGGEELSLEEIKTGIKAGCLSLSIVPMLCGTAFKNKGVQPLLDAVVAYLPAPDEVANIKGEYEDGTEVSVKSTDDGEFAGLAFKIMTDPFVGQLTFVRVYRGCLESGSYAYNSTKDKKERIGRLLKMHSNKREEIKVLYAGEIGAVVGLKDTLTGDTLASEKDKVILERMDFPDPVISVAVEPKTKADQEKMSIALNKLAQEDPSFRVSTDEESGQTIISGMGELHLEIIVDRMLREFKVEAEVGQPQVAYRETIRKAVEQEYKYAKQSGGRGQYGHVFLRLEPLEPGSGYEFVNDIKGGVIPKEYIPAVDKGVQEALQNGVLAGYPVEDVKVTVYDGSYHEVDSSEMAFKLAASMGFKEGARKAGAVILEPMMKVEVETPEDYMGDVIGDLNKRRGQVNSMDERGGNKIITAFCPLAEMFGYSTDLRSQTQGRATYSMEFNHYDEVPKNVADEIIKKRNG.

One can recognise a tr-type G domain in the interval 8-283 (KKVRNIGIAA…AVVAYLPAPD (276 aa)). GTP contacts are provided by residues 17–24 (AHIDAGKT), 81–85 (DTPGH), and 135–138 (NKMD).

The protein belongs to the TRAFAC class translation factor GTPase superfamily. Classic translation factor GTPase family. EF-G/EF-2 subfamily.

It localises to the cytoplasm. Catalyzes the GTP-dependent ribosomal translocation step during translation elongation. During this step, the ribosome changes from the pre-translocational (PRE) to the post-translocational (POST) state as the newly formed A-site-bound peptidyl-tRNA and P-site-bound deacylated tRNA move to the P and E sites, respectively. Catalyzes the coordinated movement of the two tRNA molecules, the mRNA and conformational changes in the ribosome. In Campylobacter jejuni subsp. doylei (strain ATCC BAA-1458 / RM4099 / 269.97), this protein is Elongation factor G.